The sequence spans 253 residues: Uracil-DNA glycosylase (253 aa).

Residue aspartate 79 is the Proton acceptor of the active site.

This sequence belongs to the uracil-DNA glycosylase (UDG) superfamily. UNG family.

It localises to the cytoplasm. The catalysed reaction is Hydrolyzes single-stranded DNA or mismatched double-stranded DNA and polynucleotides, releasing free uracil.. Functionally, excises uracil residues from the DNA which can arise as a result of misincorporation of dUMP residues by DNA polymerase or due to deamination of cytosine. The chain is Uracil-DNA glycosylase from Xylella fastidiosa (strain 9a5c).